Consider the following 319-residue polypeptide: uncharacterized protein (319 aa).

Residues 270–290 form a helical membrane-spanning segment; it reads AAALWWIPAWLAMIVEVAVLG.

Its subcellular location is the membrane. This is an uncharacterized protein from Mycobacterium tuberculosis (strain CDC 1551 / Oshkosh).